Reading from the N-terminus, the 802-residue chain is Copper-exporting P-type ATPase (802 aa).

HMA domains lie at 5 to 70 (KKTT…YGVA) and 72 to 138 (ETVE…YDAS). Cu(+) is bound by residues C16, C19, C83, and C86. Helical transmembrane passes span 161-181 (LIIS…HLFN), 192-212 (WFQF…FYVG), 224-244 (MDVL…YEMI), 256-276 (LYFE…YLEA), 411-431 (YFVP…ITLV), and 438-458 (PALV…LGLA). D495 acts as the 4-aspartylphosphate intermediate in catalysis. Mg(2+) contacts are provided by D690 and D694. 2 consecutive transmembrane segments (helical) span residues 748–767 (LFWA…LGLL) and 771–790 (VAGA…ALRL).

The protein belongs to the cation transport ATPase (P-type) (TC 3.A.3) family. Type IB subfamily.

It localises to the cell membrane. It carries out the reaction Cu(+)(in) + ATP + H2O = Cu(+)(out) + ADP + phosphate + H(+). Involved in copper export. This Staphylococcus aureus (strain bovine RF122 / ET3-1) protein is Copper-exporting P-type ATPase (copA).